The sequence spans 360 residues: ACT1-like protein (360 aa).

The disordered stretch occupies residues lysine 339–glutamine 360.

Interacts with the receptor complex composed of ilcr-1 and ilcr-2. Also interacts with pik-1. In terms of tissue distribution, expressed in neurons.

Its function is as follows. May act as an adapter to facilitate downstream signaling for the receptor complex composed of ilcr-1 and ilcr-2, which is a signaling complex that modulates neuronal activity and animal behavior in response to sensory neuron input. The protein is ACT1-like protein of Caenorhabditis elegans.